A 406-amino-acid polypeptide reads, in one-letter code: Formate-dependent phosphoribosylglycinamide formyltransferase (406 aa).

Residues 27–28 (EL) and Glu-87 each bind N(1)-(5-phospho-beta-D-ribosyl)glycinamide. Residues Arg-120, Lys-162, 167-172 (SSGKGQ), 202-205 (EGFI), and Glu-210 contribute to the ATP site. In terms of domain architecture, ATP-grasp spans 125 to 320 (RLAAETLGLP…EFELHARALL (196 aa)). Positions 279 and 291 each coordinate Mg(2+). Residues Asp-298, Lys-367, and 374 to 375 (RR) contribute to the N(1)-(5-phospho-beta-D-ribosyl)glycinamide site.

Belongs to the PurK/PurT family. Homodimer.

It catalyses the reaction N(1)-(5-phospho-beta-D-ribosyl)glycinamide + formate + ATP = N(2)-formyl-N(1)-(5-phospho-beta-D-ribosyl)glycinamide + ADP + phosphate + H(+). It functions in the pathway purine metabolism; IMP biosynthesis via de novo pathway; N(2)-formyl-N(1)-(5-phospho-D-ribosyl)glycinamide from N(1)-(5-phospho-D-ribosyl)glycinamide (formate route): step 1/1. Its function is as follows. Involved in the de novo purine biosynthesis. Catalyzes the transfer of formate to 5-phospho-ribosyl-glycinamide (GAR), producing 5-phospho-ribosyl-N-formylglycinamide (FGAR). Formate is provided by PurU via hydrolysis of 10-formyl-tetrahydrofolate. The chain is Formate-dependent phosphoribosylglycinamide formyltransferase from Bordetella bronchiseptica (strain ATCC BAA-588 / NCTC 13252 / RB50) (Alcaligenes bronchisepticus).